A 738-amino-acid chain; its full sequence is Interleukin-12 receptor subunit beta-1 (738 aa).

The N-terminal stretch at 1–19 is a signal peptide; that stretch reads MDMMGLAGTSKHITFLLLC. Over 20-565 the chain is Extracellular; that stretch reads QLGASGPGDG…QRFSFEVQIS (546 aa). Fibronectin type-III domains are found at residues 47-152, 152-258, 259-359, 360-465, and 469-565; these read GPRN…TPPL, LGHI…PEVL, PQAK…LPAQ, ELTE…GNAS, and TPRH…VQIS. Asparagine 50 is a glycosylation site (N-linked (GlcNAc...) asparagine). An intrachain disulfide couples cysteine 53 to cysteine 63. Residues asparagine 73, asparagine 86, asparagine 130, asparagine 144, asparagine 169, and asparagine 188 are each glycosylated (N-linked (GlcNAc...) asparagine). The WSXWS motif motif lies at 244–248; sequence WSDWS. N-linked (GlcNAc...) asparagine glycans are attached at residues asparagine 330, asparagine 368, asparagine 374, asparagine 401, asparagine 463, and asparagine 477. Residues 566-591 traverse the membrane as a helical segment; sequence RLSIIFASLGSFASVLLVGSLGYIGL. Over 592–738 the chain is Cytoplasmic; sequence NRAAWHLCPP…PGPPTLGQEA (147 aa). Residues 598–606 carry the Box 1 motif motif; it reads LCPPLPTPC.

It belongs to the type I cytokine receptor family. Type 2 subfamily. In terms of assembly, dimer or oligomer; disulfide-linked. Interacts with IL12RB2 to form the high affinity IL12 receptor. Heterodimer with IL23R; in presence of IL23. The heterodimer forms the IL23 receptor.

Its subcellular location is the membrane. Functionally, functions as an interleukin receptor which binds interleukin-12 with low affinity and is involved in IL12 transduction. Associated with IL12RB2 it forms a functional, high affinity receptor for IL12. Also associates with IL23R to form the interleukin-23 receptor which functions in IL23 signal transduction probably through activation of the Jak-Stat signaling cascade. The polypeptide is Interleukin-12 receptor subunit beta-1 (Il12rb1) (Mus musculus (Mouse)).